The sequence spans 454 residues: tRNA modification GTPase MnmE (454 aa).

(6S)-5-formyl-5,6,7,8-tetrahydrofolate is bound by residues Arg23, Glu80, and Lys120. One can recognise a TrmE-type G domain in the interval 216–377 (GMKVVIAGRP…LRNNLKQSMG (162 aa)). Asn226 serves as a coordination point for K(+). GTP-binding positions include 226-231 (NAGKSS), 245-251 (TDIAGTT), 270-273 (DTAG), 335-338 (NKAD), and 358-360 (SAR). Ser230 is a Mg(2+) binding site. K(+) contacts are provided by Thr245, Ile247, and Thr250. Position 251 (Thr251) interacts with Mg(2+). Lys454 is a (6S)-5-formyl-5,6,7,8-tetrahydrofolate binding site.

This sequence belongs to the TRAFAC class TrmE-Era-EngA-EngB-Septin-like GTPase superfamily. TrmE GTPase family. In terms of assembly, homodimer. Heterotetramer of two MnmE and two MnmG subunits. Requires K(+) as cofactor.

Its subcellular location is the cytoplasm. In terms of biological role, exhibits a very high intrinsic GTPase hydrolysis rate. Involved in the addition of a carboxymethylaminomethyl (cmnm) group at the wobble position (U34) of certain tRNAs, forming tRNA-cmnm(5)s(2)U34. The sequence is that of tRNA modification GTPase MnmE from Salmonella paratyphi A (strain ATCC 9150 / SARB42).